The following is a 188-amino-acid chain: ATP synthase subunit p18, mitochondrial (188 aa).

A mitochondrion-targeting transit peptide spans 1–18; that stretch reads MMRRVYSPVFCSVAAARF. PPR repeat units lie at residues 36 to 70, 75 to 109, and 116 to 146; these read TNTA…PPDI, ATLQ…EMQH, and NEES…METE.

As to quaternary structure, F-type ATPases have 2 components, F(1) - the catalytic core - and F(o) - the membrane proton channel. F(1) has five subunits: alpha(3), beta(3), gamma(1), delta(1), epsilon(1), plus the additional subunit P18 (Tb427.05.1710) that is not present in F(1)F(o) ATP synthase from metazoa. Subunit P18 (Tb927.5.1710) interacts with the alpha subunit with a 1:1 stoichiometry; the interaction is direct. Subunit gamma is part of the central stalk. F(o) has three main subunits: a, b and c. The trypanosomal ATPase complex contains additional subunits that are not present in the F(1)F(o) ATP synthase from metazoa.

It localises to the mitochondrion. Its subcellular location is the mitochondrion inner membrane. Mitochondrial membrane ATP synthase (F(1)F(o) ATP synthase) produces ATP from ADP in the presence of a proton gradient across the membrane which is generated by electron transport complexes of the respiratory chain. F-type ATPases consist of two structural domains, F(1) - containing the extramembraneous catalytic core, and F(o) - containing the membrane proton channel, linked together by a central stalk and a peripheral stalk. During catalysis, ATP synthesis in the catalytic domain of F(1) is coupled via a rotary mechanism of the central stalk subunits to proton translocation. Subunits alpha and beta form the catalytic core in F(1). Rotation of the central stalk against the surrounding alpha(3)beta(3) subunits leads to hydrolysis of ATP in three separate catalytic sites on the beta subunits. Contrary to the procyclic, insect form that requires F(1)F(o) ATP synthase for ATP synthesis, the bloodstream form relies on ATP hydrolysis by F(1)F(o) ATP synthase to maintain its mitochondrial membrane potential. In Trypanosoma brucei brucei, this protein is ATP synthase subunit p18, mitochondrial.